The sequence spans 142 residues: Prefoldin subunit alpha 1 (142 aa).

Belongs to the prefoldin subunit alpha family. As to quaternary structure, heterohexamer of two alpha and four beta subunits.

Its subcellular location is the cytoplasm. Molecular chaperone capable of stabilizing a range of proteins. Seems to fulfill an ATP-independent, HSP70-like function in archaeal de novo protein folding. The protein is Prefoldin subunit alpha 1 (pfdA1) of Methanocaldococcus jannaschii (strain ATCC 43067 / DSM 2661 / JAL-1 / JCM 10045 / NBRC 100440) (Methanococcus jannaschii).